A 530-amino-acid chain; its full sequence is BTB/POZ domain-containing protein 3 (530 aa).

Residues 23-48 are disordered; that stretch reads KNRSKKGSKKANSSGGGGGGGSVGSG. Residues 36–46 show a composition bias toward gly residues; that stretch reads SGGGGGGGSVG. Residues 128-198 form the BTB domain; that stretch reads ADVHFVVGPP…IYCDEIDLAA (71 aa). A BACK domain is found at 243–308; the sequence is FEEPDLTQRC…NWAEVECQRQ (66 aa).

In terms of tissue distribution, in the somatosensory cortex, specifically expressed in spiny stellate neurons during barrel formation. Also expressed in the olfactory bulb, piriform cortex and hippocampus.

Its subcellular location is the cytoplasm. The protein resides in the cytosol. The protein localises to the nucleus. Functionally, acts as a key regulator of dendritic field orientation during development of sensory cortex. Also directs dendrites toward active axon terminals when ectopically expressed. This Mus musculus (Mouse) protein is BTB/POZ domain-containing protein 3 (Btbd3).